A 426-amino-acid polypeptide reads, in one-letter code: Synaptotagmin-13 (426 aa).

Over 1 to 6 the chain is Vesicular; sequence MVLSVP. A helical transmembrane segment spans residues 7-29; the sequence is VIALGATLGTATSILALCGVTCL. The Cytoplasmic segment spans residues 30–426; it reads CRHMHPKKGL…QIAMWHQLHL (397 aa). C2 domains follow at residues 158–275 and 287–422; these read QAPK…AQWG and GAGE…AMWH.

The protein belongs to the synaptotagmin family. As to quaternary structure, interacts with NRXN1. Expressed in brain, heart, spleen, lung and testis.

It localises to the cytoplasmic vesicle membrane. In terms of biological role, may be involved in transport vesicle docking to the plasma membrane. The protein is Synaptotagmin-13 (Syt13) of Mus musculus (Mouse).